The primary structure comprises 68 residues: Large ribosomal subunit protein uL30 (68 aa).

This sequence belongs to the universal ribosomal protein uL30 family. Part of the 50S ribosomal subunit.

This is Large ribosomal subunit protein uL30 from Bartonella henselae (strain ATCC 49882 / DSM 28221 / CCUG 30454 / Houston 1) (Rochalimaea henselae).